A 96-amino-acid chain; its full sequence is Signal recognition particle 19 kDa protein (96 aa).

It belongs to the SRP19 family. As to quaternary structure, part of the signal recognition particle protein translocation system, which is composed of SRP and FtsY. Archaeal SRP consists of a 7S RNA molecule of 300 nucleotides and two protein subunits: SRP54 and SRP19.

The protein localises to the cytoplasm. Involved in targeting and insertion of nascent membrane proteins into the cytoplasmic membrane. Binds directly to 7S RNA and mediates binding of the 54 kDa subunit of the SRP. In Pyrobaculum arsenaticum (strain DSM 13514 / JCM 11321 / PZ6), this protein is Signal recognition particle 19 kDa protein.